Here is a 121-residue protein sequence, read N- to C-terminus: Small ribosomal subunit protein uS13 (121 aa).

The tract at residues 89-121 (RRHRMSLPVRGQRTRTNARTRRGSRKTVAGRKK) is disordered. Residues 100–121 (QRTRTNARTRRGSRKTVAGRKK) are compositionally biased toward basic residues.

Belongs to the universal ribosomal protein uS13 family. In terms of assembly, part of the 30S ribosomal subunit. Forms a loose heterodimer with protein S19. Forms two bridges to the 50S subunit in the 70S ribosome.

In terms of biological role, located at the top of the head of the 30S subunit, it contacts several helices of the 16S rRNA. In the 70S ribosome it contacts the 23S rRNA (bridge B1a) and protein L5 of the 50S subunit (bridge B1b), connecting the 2 subunits; these bridges are implicated in subunit movement. Contacts the tRNAs in the A and P-sites. This chain is Small ribosomal subunit protein uS13, found in Prochlorococcus marinus subsp. pastoris (strain CCMP1986 / NIES-2087 / MED4).